We begin with the raw amino-acid sequence, 146 residues long: MORN repeat-containing protein 4 (146 aa).

4 MORN repeats span residues 16 to 38, 39 to 61, 62 to 84, and 85 to 107; these read YRGEWKEGRRHGFGQLMFADGGT, YLGHFENGLFNGFGVLTFSDGSR, YEGEFSQGKFNGVGVFIRYDNMT, and FEGEFKNGRVDGFGLLTFPDGSH.

Interacts with MYO3A.

It localises to the cytoplasm. Its subcellular location is the cell projection. The protein resides in the filopodium tip. It is found in the stereocilium. Functionally, plays a role in promoting axonal degeneration following neuronal injury by toxic insult or trauma. The protein is MORN repeat-containing protein 4 (Morn4) of Rattus norvegicus (Rat).